Reading from the N-terminus, the 42-residue chain is Photosystem I reaction center subunit IX (42 aa).

A helical transmembrane segment spans residues 7-27 (FLSTAPVLIMALLTVTAGILI).

Belongs to the PsaJ family.

The protein resides in the cellular thylakoid membrane. In terms of biological role, may help in the organization of the PsaE and PsaF subunits. The sequence is that of Photosystem I reaction center subunit IX from Crocosphaera subtropica (strain ATCC 51142 / BH68) (Cyanothece sp. (strain ATCC 51142)).